Consider the following 77-residue polypeptide: Sec-independent protein translocase protein TatA (77 aa).

Residues 1–21 (MGGLSIWHWLIVLLIVALVFG) form a helical membrane-spanning segment. The interval 40 to 77 (KDGMREGEAPADPQQLPRSGSVNVDAKDATRSSDSNKA) is disordered. Over residues 64–77 (DAKDATRSSDSNKA) the composition is skewed to basic and acidic residues.

This sequence belongs to the TatA/E family. The Tat system comprises two distinct complexes: a TatABC complex, containing multiple copies of TatA, TatB and TatC subunits, and a separate TatA complex, containing only TatA subunits. Substrates initially bind to the TatABC complex, which probably triggers association of the separate TatA complex to form the active translocon.

The protein localises to the cell inner membrane. Its function is as follows. Part of the twin-arginine translocation (Tat) system that transports large folded proteins containing a characteristic twin-arginine motif in their signal peptide across membranes. TatA could form the protein-conducting channel of the Tat system. This chain is Sec-independent protein translocase protein TatA, found in Burkholderia thailandensis (strain ATCC 700388 / DSM 13276 / CCUG 48851 / CIP 106301 / E264).